Consider the following 328-residue polypeptide: Homeobox protein DLX-2 (328 aa).

Composition is skewed to polar residues over residues 16-28 (QIAASSTYHQHQQ) and 52-72 (ESPTLPVSTATDSSYYTNQQH). Disordered stretches follow at residues 16–81 (QIAA…GGGG), 211–270 (WKSG…SSPS), and 300–328 (LHPTQTPQPHHHHHHHGGGGAPVSAGTIF). The segment at residues 152 to 211 (VRKPRTIYSSFQLAALQRRFQKTQYLALPERAELAASLGLTQTQVKIWFQNRRSKFKKMW) is a DNA-binding region (homeobox). At Ser232 the chain carries Phosphoserine. Positions 250 to 264 (AGGGGPGSGGSGAGS) are enriched in gly residues.

This sequence belongs to the distal-less homeobox family. Interacts (via homeobox DNA-binding domain) with POU4F2; this interaction enhances retinal ganglion cell (RGC) differentiation.

The protein resides in the nucleus. Functionally, acts as a transcriptional activator. Activates transcription of CGA/alpha-GSU, via binding to the downstream activin regulatory element (DARE) in the gene promoter. Plays a role in terminal differentiation of interneurons, such as amacrine and bipolar cells in the developing retina. Likely to play a regulatory role in the development of the ventral forebrain. May play a role in craniofacial patterning and morphogenesis. This is Homeobox protein DLX-2 (DLX2) from Homo sapiens (Human).